The following is a 453-amino-acid chain: Ankyrin repeat and SOCS box protein 16 (453 aa).

ANK repeat units follow at residues 56–85 (CRDP…AANM), 110–139 (KQTA…ELDA), 142–171 (GGRA…KANV), 175–204 (EGTT…TVNL), 209–238 (SQET…DVGL), 242–279 (QGET…DARA), and 283–312 (KRHT…RAEV). Residues 398–450 (YSSALCMVNQPRQLQHLARLAVRARLGSRCRQGATRLPLPPLLRDYLLLRVEG) form the SOCS box domain.

The protein belongs to the ankyrin SOCS box (ASB) family.

It participates in protein modification; protein ubiquitination. Its function is as follows. May be a substrate-recognition component of a SCF-like ECS (Elongin-Cullin-SOCS-box protein) E3 ubiquitin-protein ligase complex which mediates the ubiquitination and subsequent proteasomal degradation of target proteins. The polypeptide is Ankyrin repeat and SOCS box protein 16 (ASB16) (Homo sapiens (Human)).